The primary structure comprises 305 residues: Pseudouridine-5'-phosphate glycosidase (305 aa).

Glu-30 (proton donor) is an active-site residue. Residues Lys-91 and Val-111 each coordinate substrate. Asp-143 contacts Mn(2+). Residue 145–147 participates in substrate binding; sequence SAD. The active-site Nucleophile is Lys-164.

The protein belongs to the pseudouridine-5'-phosphate glycosidase family. Homotrimer. Mn(2+) is required as a cofactor.

The catalysed reaction is D-ribose 5-phosphate + uracil = psi-UMP + H2O. In terms of biological role, catalyzes the reversible cleavage of pseudouridine 5'-phosphate (PsiMP) to ribose 5-phosphate and uracil. Functions biologically in the cleavage direction, as part of a pseudouridine degradation pathway. This Mesorhizobium japonicum (strain LMG 29417 / CECT 9101 / MAFF 303099) (Mesorhizobium loti (strain MAFF 303099)) protein is Pseudouridine-5'-phosphate glycosidase.